Consider the following 307-residue polypeptide: MAQASRKAVVAIAGSSGMIGSALAAALRANDHLVLRIVRRTPANAEELHWNPESGEFDTDAITDVDAVVNLCGVNLGQRRWSGSFKQNLRDSRITPTEVLSAAVAEAGVKTFINASAVGYYGNTRDRVVDENDRAGTGFLAQLCQDWEGATLPAQYAGTRVILARTGMVLAQEAGVLSRMRPLFSFALGARIGNGRQYMSWISLEDEVRALLFAISHQSLSGPLNLTGPAPVTNAEFTTAFGRAINRPTPLMLPSFAVRAALGEFADEGLLIGQRAIPAALERAGFQFHHNTIGEALSYATTRPSQN.

Belongs to the NAD(P)-dependent epimerase/dehydratase family. SDR39U1 subfamily.

The sequence is that of Epimerase family protein ML0860 from Mycobacterium leprae (strain TN).